Reading from the N-terminus, the 268-residue chain is uncharacterized protein (268 aa).

The disordered stretch occupies residues 45–64 (SDTQGPAPGINGQGKPSPGA).

This is an uncharacterized protein from Aquifex aeolicus (strain VF5).